Here is a 732-residue protein sequence, read N- to C-terminus: Phosphoribosylformylglycinamidine synthase subunit PurL (732 aa).

H42 is a catalytic residue. The ATP site is built by Y45 and K84. E86 lines the Mg(2+) pocket. Substrate-binding positions include 87 to 90 (SHNH) and R109. H88 functions as the Proton acceptor in the catalytic mechanism. Residue D110 coordinates Mg(2+). A substrate-binding site is contributed by Q238. D266 is a Mg(2+) binding site. 310 to 312 (ESQ) provides a ligand contact to substrate. Residues D496 and G533 each contribute to the ATP site. Residue N534 coordinates Mg(2+). S536 contacts substrate.

Belongs to the FGAMS family. In terms of assembly, monomer. Part of the FGAM synthase complex composed of 1 PurL, 1 PurQ and 2 PurS subunits.

The protein localises to the cytoplasm. The catalysed reaction is N(2)-formyl-N(1)-(5-phospho-beta-D-ribosyl)glycinamide + L-glutamine + ATP + H2O = 2-formamido-N(1)-(5-O-phospho-beta-D-ribosyl)acetamidine + L-glutamate + ADP + phosphate + H(+). The protein operates within purine metabolism; IMP biosynthesis via de novo pathway; 5-amino-1-(5-phospho-D-ribosyl)imidazole from N(2)-formyl-N(1)-(5-phospho-D-ribosyl)glycinamide: step 1/2. Functionally, part of the phosphoribosylformylglycinamidine synthase complex involved in the purines biosynthetic pathway. Catalyzes the ATP-dependent conversion of formylglycinamide ribonucleotide (FGAR) and glutamine to yield formylglycinamidine ribonucleotide (FGAM) and glutamate. The FGAM synthase complex is composed of three subunits. PurQ produces an ammonia molecule by converting glutamine to glutamate. PurL transfers the ammonia molecule to FGAR to form FGAM in an ATP-dependent manner. PurS interacts with PurQ and PurL and is thought to assist in the transfer of the ammonia molecule from PurQ to PurL. This chain is Phosphoribosylformylglycinamidine synthase subunit PurL, found in Campylobacter hominis (strain ATCC BAA-381 / DSM 21671 / CCUG 45161 / LMG 19568 / NCTC 13146 / CH001A).